Reading from the N-terminus, the 234-residue chain is uncharacterized protein (234 aa).

The interval Q65–N89 is disordered. The RING-type zinc finger occupies C185–K220.

This sequence belongs to the IIV-6 175R/332L family.

This is an uncharacterized protein from Acheta domesticus (House cricket).